Here is a 796-residue protein sequence, read N- to C-terminus: AUGMIN subunit 5 (796 aa).

Residues 79–120 (HGGSSNASIGSSVNPGKEESKSKGRRKDKTVTGESSSYAEDR) are disordered. Residues 80–92 (GGSSNASIGSSVN) are compositionally biased toward polar residues. Coiled-coil stretches lie at residues 115 to 191 (SYAE…EATR) and 462 to 501 (GKEREAAGLRASLNTLLSEIQRLNKLCAERKEAEDSLKKK).

This sequence belongs to the HAUS5 family. Part of the augmin complex composed of 8 subunits. The complex acts on microtubules and interacts with gamma-tubulin in spindles and the phragmoplast.

Its subcellular location is the cytoplasm. The protein localises to the cytoskeleton. The protein resides in the spindle. It localises to the phragmoplast. Functionally, involved in microtubules reorganization during spindle and phragmoplast development. The sequence is that of AUGMIN subunit 5 from Arabidopsis thaliana (Mouse-ear cress).